The primary structure comprises 220 residues: Octanoyltransferase (220 aa).

Positions Pro-27–Val-208 constitute a BPL/LPL catalytic domain. Residues Arg-66–His-73, Ala-139–Gly-141, and Gly-152–Ala-154 contribute to the substrate site. Catalysis depends on Cys-170, which acts as the Acyl-thioester intermediate.

It belongs to the LipB family.

The protein localises to the cytoplasm. The catalysed reaction is octanoyl-[ACP] + L-lysyl-[protein] = N(6)-octanoyl-L-lysyl-[protein] + holo-[ACP] + H(+). It participates in protein modification; protein lipoylation via endogenous pathway; protein N(6)-(lipoyl)lysine from octanoyl-[acyl-carrier-protein]: step 1/2. Its function is as follows. Catalyzes the transfer of endogenously produced octanoic acid from octanoyl-acyl-carrier-protein onto the lipoyl domains of lipoate-dependent enzymes. Lipoyl-ACP can also act as a substrate although octanoyl-ACP is likely to be the physiological substrate. The polypeptide is Octanoyltransferase (Bordetella pertussis (strain Tohama I / ATCC BAA-589 / NCTC 13251)).